Here is a 431-residue protein sequence, read N- to C-terminus: MAKIINVIGREIMDSRGNPTVEAEVHLEGGFVGMAAAPSGASTGSREALELRDGDKSRYLGKGVLTAVANVNGVIRTALLGKDATAQAELDQIMIDLDGTENKDKLGANAILAVSLAAAKAAAASKGIPLYAHIAELNGTPGQYSMPVPMMNILNGGEHADNNVDIQEFMVQPVGAKTFREALRMGAEIFHTLKKVLHDKGLSTSVGDEGGFAPNLASNADALAVIKEAVELAGYKLGTDVTLALDCAASEFYKDGKYDLAGEGKVFDSNGFSDFLKSLADQYPIVSIEDGLDESDWDGWAYQTQIMGDKIQLVGDDLFVTNTKILTRGIENGIANSILIKFNQIGSLTETLAAIRMAKEAGYTAVISHRSGETEDATIADLAVGTAAGQIKTGSLCRSDRVAKYNQLLRIEEQLGEKAPYRGLKEIKGQA.

Q167 serves as a coordination point for (2R)-2-phosphoglycerate. Catalysis depends on E209, which acts as the Proton donor. Mg(2+) contacts are provided by D246, E289, and D316. (2R)-2-phosphoglycerate-binding residues include K341, R370, S371, and K392. K341 acts as the Proton acceptor in catalysis.

Belongs to the enolase family. In terms of assembly, component of the RNA degradosome, a multiprotein complex involved in RNA processing and mRNA degradation. The cofactor is Mg(2+).

It localises to the cytoplasm. The protein localises to the secreted. It is found in the cell surface. It carries out the reaction (2R)-2-phosphoglycerate = phosphoenolpyruvate + H2O. It participates in carbohydrate degradation; glycolysis; pyruvate from D-glyceraldehyde 3-phosphate: step 4/5. Its function is as follows. Catalyzes the reversible conversion of 2-phosphoglycerate (2-PG) into phosphoenolpyruvate (PEP). It is essential for the degradation of carbohydrates via glycolysis. This Shewanella putrefaciens (strain CN-32 / ATCC BAA-453) protein is Enolase.